The primary structure comprises 511 residues: Ribonuclease Y (511 aa).

Residues 3–23 (VGILIGIIILGVVGFIQYTLI) form a helical membrane-spanning segment. The region spanning 201 to 286 (TVHVVALPND…EMVERAIKDV (86 aa)) is the KH domain. The HD domain maps to 327–420 (VLKHSIEVSY…VQAADAISAA (94 aa)).

It belongs to the RNase Y family.

Its subcellular location is the cell membrane. Endoribonuclease that initiates mRNA decay. The protein is Ribonuclease Y of Clostridium perfringens (strain ATCC 13124 / DSM 756 / JCM 1290 / NCIMB 6125 / NCTC 8237 / Type A).